Here is a 501-residue protein sequence, read N- to C-terminus: Sucrose transport protein SUT2 (501 aa).

Residues 1–31 lie on the Cytoplasmic side of the membrane; that stretch reads MPRRPSGGGGGAGPAAAAVRKVPLRKLLRAA. The helical transmembrane segment at 32-52 threads the bilayer; sequence SVACGVQFGWALQLSLLTPYV. Over 53–55 the chain is Extracellular; the sequence is QEL. Residues 56 to 76 traverse the membrane as a helical segment; the sequence is GIPHAFASLVWLCGPLSGLLV. At 77–98 the chain is on the cytoplasmic side; that stretch reads QPLVGHLSDRIAPAASPLGRRR. A helical transmembrane segment spans residues 99–119; the sequence is PFIAAGAASIAAAVLTVGFSA. At 120–135 the chain is on the extracellular side; the sequence is DLGRIFGDSITPGSTR. A helical transmembrane segment spans residues 136 to 156; it reads LGAIIVYLVGFWLLDVGNNAT. Residues 157-176 are Cytoplasmic-facing; the sequence is QGPCRAFLADLTENDPRRTR. Residues 177-197 form a helical membrane-spanning segment; the sequence is IANAYFSLFMALGNILGYATG. Residues 198 to 222 lie on the Extracellular side of the membrane; the sequence is AYSGWYKIFPFTVTPSCSISCANLK. The chain crosses the membrane as a helical span at residues 223 to 243; the sequence is SAFLLDIIILVVTTCITVASV. Residues 244–278 lie on the Cytoplasmic side of the membrane; sequence QEPQSLGSDEADHPSTEQEAFLWELFGSFRYFTLP. The helical transmembrane segment at 279–299 threads the bilayer; sequence VWMVLIVTALTWIGWFPFILF. The Extracellular portion of the chain corresponds to 300-327; that stretch reads DTDWMGREIYRGSPDDPSITQSYHDGVR. A helical transmembrane segment spans residues 328–348; that stretch reads MGSFGLMLNSVLLGFTSIVLE. Topologically, residues 349–356 are cytoplasmic; sequence KLCRKWGA. Residues 357-377 traverse the membrane as a helical segment; it reads GLVWGVSNILMALCFVAMLVI. At 378–394 the chain is on the extracellular side; that stretch reads TYVAKNMDYPPSGVPPT. The chain crosses the membrane as a helical span at residues 395–415; that stretch reads GIVIASLVVFTILGAPLAITY. Residues 416–433 lie on the Cytoplasmic side of the membrane; it reads SIPYAMAASRVENLGLGQ. Residues 434-454 traverse the membrane as a helical segment; it reads GLAMGILNLAIVIPQVIVSLG. At 455–467 the chain is on the extracellular side; the sequence is SGPWDQLFGGGNA. The helical transmembrane segment at 468 to 488 threads the bilayer; the sequence is PAFAVAAAASFIGGLVAILGL. Topologically, residues 489–501 are cytoplasmic; it reads PRARIASRRRGHR.

Belongs to the glycoside-pentoside-hexuronide (GPH) cation symporter transporter (TC 2.A.2.4) family. In terms of assembly, homodimer. Expressed in source leaf blades.

Its subcellular location is the cell membrane. Its pathway is glycan biosynthesis; sucrose metabolism. Its function is as follows. Responsible for the transport of sucrose into the cell, with the concomitant uptake of protons (symport system). May also transport other glucosides. The sequence is that of Sucrose transport protein SUT2 (SUT2) from Oryza sativa subsp. indica (Rice).